The primary structure comprises 119 residues: MARSVVAALLVLLSLSGLEAIQHAPKIQVYSRHPAENGKPNYLNCYVSGFHPSDIEVDLLKNGQKIENVEHSDLSFSKDWSFYLLYYTEFTPNEKDEYACRVSHVTFPTPKTVKWDRNM.

The signal sequence occupies residues 1–20 (MARSVVAALLVLLSLSGLEA). The Ig-like C1-type domain occupies 25–114 (PKIQVYSRHP…VTFPTPKTVK (90 aa)). A disulfide bond links cysteine 45 and cysteine 100.

It belongs to the beta-2-microglobulin family. In terms of assembly, heterodimer of an alpha chain and a beta chain. Beta-2-microglobulin is the beta-chain of major histocompatibility complex class I molecules.

It localises to the secreted. In terms of biological role, component of the class I major histocompatibility complex (MHC). Involved in the presentation of peptide antigens to the immune system. This is Beta-2-microglobulin (B2M) from Saimiri boliviensis boliviensis (Bolivian squirrel monkey).